The chain runs to 572 residues: Outer spore wall assembly protein SHE10 (572 aa).

An N-terminal signal peptide occupies residues 1 to 19; that stretch reads MRAISKLFVFTVLVLGSLQ. 2 coiled-coil regions span residues 351 to 372 and 485 to 510; these read SQAN…REVV and FQER…LREQ. Residues 539–572 are disordered; sequence STSWSVPPADARAEPASGSPIQQAASEAAQQPSV. The segment covering 560 to 572 has biased composition (low complexity); sequence QQAASEAAQQPSV.

This sequence belongs to the SHE10 family. As to quaternary structure, component of the mitochondria-localized RNase mitochondrial RNA-processing (RNase MRP) composed of one single RNA encoded by the NME1 gene and at least 31 proteins. Absent in the nucleus-localized RNase MRP (NuMRP).

It localises to the mitochondrion. Involved in spore wall assembly. May be a component of the mitochondrial RNase MRP (MtMRP), a ribonucleoprotein endoribonuclease involved in the cleaving RNA transcripts to generate primers for DNA replication in mitochondria. The polypeptide is Outer spore wall assembly protein SHE10 (Eremothecium gossypii (strain ATCC 10895 / CBS 109.51 / FGSC 9923 / NRRL Y-1056) (Yeast)).